A 317-amino-acid chain; its full sequence is MRLAVVCFCLFGLASCLPVKVAEFGSSEEKAHYSKHSDAVATWLKPDPSQKQNLLAPQNSVSSEETDDFKQETLPSNSNESHDHMDDDDDDDDDGDHAESEDSVNSDESDESHHSDESDESFTASTQADVLTPIAPTVDVPDGRGDSLAYGLRSKSRSFPVSDEQYPDATDEDLTSRMKSQESDEAIKVIPVAQRLSVPSDQDSNGKTSHESSQLDEPSVETHSLEQSKEYKQRASHESTEQSDAIDSAEKPDAIDSAERSDAIDSQASSKASLEHQSHEFHSHEDKLVLDPKSKEDDRYLKFRISHELESSSSEVN.

A signal peptide spans 1-16 (MRLAVVCFCLFGLASC). 5 positions are modified to phosphoserine: serine 26, serine 27, serine 60, serine 62, and serine 63. The interval 43–297 (WLKPDPSQKQ…LVLDPKSKED (255 aa)) is disordered. A compositionally biased stretch (polar residues) spans 49 to 63 (SQKQNLLAPQNSVSS). Residue threonine 66 is modified to Phosphothreonine. Residues serine 76, serine 78, serine 81, serine 106, serine 109, serine 112, serine 115, and serine 118 each carry the phosphoserine modification. Acidic residues predominate over residues 86–110 (DDDDDDDDDGDHAESEDSVNSDESD). O-linked (GalNAc...) threonine glycans are attached at residues threonine 123, threonine 132, and threonine 137. Positions 144–146 (RGD) match the Cell attachment site motif. 2 positions are modified to phosphothreonine: threonine 170 and threonine 175. The segment covering 174–187 (LTSRMKSQESDEAI) has biased composition (basic and acidic residues). 7 positions are modified to phosphoserine: serine 176, serine 180, serine 200, serine 204, serine 209, serine 213, and serine 219. Polar residues predominate over residues 197–216 (SVPSDQDSNGKTSHESSQLD). Serine 219 carries an O-linked (Xyl...) (chondroitin sulfate) serine glycan. A Phosphothreonine modification is found at threonine 222. 2 stretches are compositionally biased toward basic and acidic residues: residues 223-240 (HSLEQSKEYKQRASHEST) and 248-263 (SAEKPDAIDSAERSDA). Phosphoserine is present on residues serine 224, serine 228, serine 257, serine 261, serine 266, serine 270, serine 273, serine 278, serine 283, serine 294, serine 306, serine 311, serine 313, and serine 314. Residues 273-297 (SLEHQSHEFHSHEDKLVLDPKSKED) are compositionally biased toward basic and acidic residues. O-linked (Xyl...) (chondroitin sulfate) serine glycosylation occurs at serine 311.

Belongs to the osteopontin family. Interacts (via N-terminus) with integrin ITGA9:ITGB1. In terms of processing, extensively phosphorylated by FAM20C in the extracellular medium at multiple sites within the S-x-E/pS motif. The phosphorylated form inhibits hydroxyapatite crystallization. Dephosphorylation via a mechanism involving ALPL/TNAP promotes hydroxyapatite crystallization. Post-translationally, O-glycosylated. Forms covalent cross-links mediated by transglutaminase TGM2, between a glutamine and the epsilon-amino group of a lysine residue, forming homopolymers and heteropolymers, increasing its collagen binding properties.

It is found in the secreted. Major non-collagenous bone protein that binds tightly to hydroxyapatite. Appears to form an integral part of the mineralized matrix. Probably important to cell-matrix interaction. Its function is as follows. Acts as a cytokine involved in enhancing production of interferon-gamma and interleukin-12 and reducing production of interleukin-10 and is essential in the pathway that leads to type I immunity. This Rattus norvegicus (Rat) protein is Osteopontin (Spp1).